A 183-amino-acid chain; its full sequence is ATP-dependent protease subunit HslV (183 aa).

Threonine 13 is a catalytic residue. Na(+)-binding residues include glycine 168, cysteine 171, and threonine 174.

Belongs to the peptidase T1B family. HslV subfamily. A double ring-shaped homohexamer of HslV is capped on each side by a ring-shaped HslU homohexamer. The assembly of the HslU/HslV complex is dependent on binding of ATP.

The protein localises to the cytoplasm. It carries out the reaction ATP-dependent cleavage of peptide bonds with broad specificity.. Its activity is regulated as follows. Allosterically activated by HslU binding. Protease subunit of a proteasome-like degradation complex believed to be a general protein degrading machinery. This chain is ATP-dependent protease subunit HslV, found in Xanthomonas euvesicatoria pv. vesicatoria (strain 85-10) (Xanthomonas campestris pv. vesicatoria).